The chain runs to 783 residues: Metabotropic glutamate receptor-like protein J (783 aa).

The N-terminal stretch at 1 to 20 (MKILLYIAIILSFFSLITIS) is a signal peptide. Residues 21 to 383 (SECKIAVLLS…DYPNSLKYGV (363 aa)) are Extracellular-facing. Residues 56 to 85 (DFSIYYENLEESMEEAEKAFQDALHKGANL) adopt a coiled-coil conformation. Residues Asn-181, Asn-196, Asn-256, Asn-282, and Asn-315 are each glycosylated (N-linked (GlcNAc...) asparagine). The chain crosses the membrane as a helical span at residues 384-404 (TIVSGVCIFICLVCMTLVVVF). The Cytoplasmic portion of the chain corresponds to 405-415 (KKARVIKSSSP). Residues 416 to 436 (AFLLLILLGCCIIFAACILFA) form a helical membrane-spanning segment. The Extracellular portion of the chain corresponds to 437 to 443 (QSPTNQT). Asn-441 carries an N-linked (GlcNAc...) asparagine glycan. The chain crosses the membrane as a helical span at residues 444–464 (CSARIWLLSLGYTLFLGNLLV). Residues 465–489 (KNWRIWLLFDNPKLKKRAITNWKLY) lie on the Cytoplasmic side of the membrane. The chain crosses the membrane as a helical span at residues 490 to 510 (PWVFAILAIDVMILAIWQGLG). Over 511–538 (NINAESRIGYDSLTQYQYKNVCSSDDQG) the chain is Extracellular. Residues 539-559 (SIALYLLLVFHGLVLLVACFI) traverse the membrane as a helical segment. The Cytoplasmic segment spans residues 560 to 575 (SFKIKVVDIEEFNESK). The helical transmembrane segment at 576–596 (PITTSVYIITFCLFIVIPLMV) threads the bilayer. Residues 597 to 604 (SPQSLTSQ) lie on the Extracellular side of the membrane. The helical transmembrane segment at 605-625 (TTIICVCAIVTTLISMLLLFG) threads the bilayer. Over 626-783 (SKFYKMATQG…GETEIDSNNV (158 aa)) the chain is Cytoplasmic. Residues 647–656 (KSSSKSSKSS) are compositionally biased toward low complexity. Disordered stretches follow at residues 647 to 696 (KSSS…FSNK) and 731 to 783 (QLQQ…SNNV). Residues 670–679 (GEDDTSDETS) show a composition bias toward acidic residues. The span at 763–783 (VLSKRISNQQNGETEIDSNNV) shows a compositional bias: polar residues.

It in the N-terminal section; belongs to the BMP lipoprotein family. The protein in the C-terminal section; belongs to the G-protein coupled receptor 3 family. GABA-B receptor subfamily.

It is found in the cell membrane. It localises to the membrane. The protein resides in the endoplasmic reticulum membrane. Its subcellular location is the golgi apparatus membrane. The protein localises to the nucleus envelope. Its function is as follows. May act during the development and be a negative regulator. This chain is Metabotropic glutamate receptor-like protein J (grlJ), found in Dictyostelium discoideum (Social amoeba).